The chain runs to 609 residues: Large ribosomal subunit assembly factor BipA (609 aa).

In terms of domain architecture, tr-type G spans 3–198 (QNIRNIAIIA…AIIKYAPAPN (196 aa)). Residues 15 to 20 (DHGKTT) and 128 to 131 (NKID) contribute to the GTP site.

This sequence belongs to the TRAFAC class translation factor GTPase superfamily. Classic translation factor GTPase family. BipA subfamily. In terms of assembly, monomer.

The protein localises to the cytoplasm. The catalysed reaction is GTP + H2O = GDP + phosphate + H(+). In terms of biological role, a 50S ribosomal subunit assembly protein with GTPase activity, required for 50S subunit assembly at low temperatures, may also play a role in translation. Binds GTP and analogs. Binds the 70S ribosome between the 30S and 50S subunits, in a similar position as ribosome-bound EF-G; it contacts a number of ribosomal proteins, both rRNAs and the A-site tRNA. The chain is Large ribosomal subunit assembly factor BipA from Buchnera aphidicola subsp. Schizaphis graminum (strain Sg).